Reading from the N-terminus, the 120-residue chain is Aspartate 1-decarboxylase (120 aa).

The active-site Schiff-base intermediate with substrate; via pyruvic acid is Ser25. Position 25 is a pyruvic acid (Ser) (Ser25). Thr57 contacts substrate. Tyr58 functions as the Proton donor in the catalytic mechanism. 73–75 (GAA) is a binding site for substrate.

Belongs to the PanD family. Heterooctamer of four alpha and four beta subunits. Pyruvate is required as a cofactor. Post-translationally, is synthesized initially as an inactive proenzyme, which is activated by self-cleavage at a specific serine bond to produce a beta-subunit with a hydroxyl group at its C-terminus and an alpha-subunit with a pyruvoyl group at its N-terminus.

Its subcellular location is the cytoplasm. It carries out the reaction L-aspartate + H(+) = beta-alanine + CO2. Its pathway is cofactor biosynthesis; (R)-pantothenate biosynthesis; beta-alanine from L-aspartate: step 1/1. Functionally, catalyzes the pyruvoyl-dependent decarboxylation of aspartate to produce beta-alanine. The protein is Aspartate 1-decarboxylase of Cupriavidus taiwanensis (strain DSM 17343 / BCRC 17206 / CCUG 44338 / CIP 107171 / LMG 19424 / R1) (Ralstonia taiwanensis (strain LMG 19424)).